A 310-amino-acid chain; its full sequence is 4-hydroxy-3-methylbut-2-enyl diphosphate reductase (310 aa).

C12 contacts [4Fe-4S] cluster. Residues H41 and H74 each contribute to the (2E)-4-hydroxy-3-methylbut-2-enyl diphosphate site. Dimethylallyl diphosphate contacts are provided by H41 and H74. Isopentenyl diphosphate is bound by residues H41 and H74. C96 lines the [4Fe-4S] cluster pocket. A (2E)-4-hydroxy-3-methylbut-2-enyl diphosphate-binding site is contributed by H124. H124 serves as a coordination point for dimethylallyl diphosphate. H124 provides a ligand contact to isopentenyl diphosphate. E126 acts as the Proton donor in catalysis. T167 contributes to the (2E)-4-hydroxy-3-methylbut-2-enyl diphosphate binding site. Position 197 (C197) interacts with [4Fe-4S] cluster. Residues S225, S226, N227, and S269 each coordinate (2E)-4-hydroxy-3-methylbut-2-enyl diphosphate. Dimethylallyl diphosphate-binding residues include S225, S226, N227, and S269. Residues S225, S226, N227, and S269 each contribute to the isopentenyl diphosphate site.

The protein belongs to the IspH family. The cofactor is [4Fe-4S] cluster.

It carries out the reaction isopentenyl diphosphate + 2 oxidized [2Fe-2S]-[ferredoxin] + H2O = (2E)-4-hydroxy-3-methylbut-2-enyl diphosphate + 2 reduced [2Fe-2S]-[ferredoxin] + 2 H(+). The enzyme catalyses dimethylallyl diphosphate + 2 oxidized [2Fe-2S]-[ferredoxin] + H2O = (2E)-4-hydroxy-3-methylbut-2-enyl diphosphate + 2 reduced [2Fe-2S]-[ferredoxin] + 2 H(+). Its pathway is isoprenoid biosynthesis; dimethylallyl diphosphate biosynthesis; dimethylallyl diphosphate from (2E)-4-hydroxy-3-methylbutenyl diphosphate: step 1/1. It functions in the pathway isoprenoid biosynthesis; isopentenyl diphosphate biosynthesis via DXP pathway; isopentenyl diphosphate from 1-deoxy-D-xylulose 5-phosphate: step 6/6. Functionally, catalyzes the conversion of 1-hydroxy-2-methyl-2-(E)-butenyl 4-diphosphate (HMBPP) into a mixture of isopentenyl diphosphate (IPP) and dimethylallyl diphosphate (DMAPP). Acts in the terminal step of the DOXP/MEP pathway for isoprenoid precursor biosynthesis. The polypeptide is 4-hydroxy-3-methylbut-2-enyl diphosphate reductase (Tolumonas auensis (strain DSM 9187 / NBRC 110442 / TA 4)).